Reading from the N-terminus, the 483-residue chain is Betaine aldehyde dehydrogenase (483 aa).

K(+) is bound by residues Ile27 and Asp93. NAD(+) is bound at residue 149-151; sequence GAW. Catalysis depends on Lys161, which acts as the Charge relay system. 175–178 serves as a coordination point for NAD(+); the sequence is KPSE. Residue Val179 participates in K(+) binding. 228-231 provides a ligand contact to NAD(+); that stretch reads SVPT. K(+) is bound at residue Val243. Catalysis depends on Glu249, which acts as the Proton acceptor. The NAD(+) site is built by Gly251, Cys283, and Glu380. Residue Cys283 is the Nucleophile of the active site. Cysteine sulfenic acid (-SOH) is present on Cys283. 2 residues coordinate K(+): Lys450 and Gly453. The Charge relay system role is filled by Glu457.

Belongs to the aldehyde dehydrogenase family. In terms of assembly, dimer of dimers. Requires K(+) as cofactor.

The enzyme catalyses betaine aldehyde + NAD(+) + H2O = glycine betaine + NADH + 2 H(+). The protein operates within amine and polyamine biosynthesis; betaine biosynthesis via choline pathway; betaine from betaine aldehyde: step 1/1. Involved in the biosynthesis of the osmoprotectant glycine betaine. Catalyzes the irreversible oxidation of betaine aldehyde to the corresponding acid. The protein is Betaine aldehyde dehydrogenase of Cereibacter sphaeroides (strain KD131 / KCTC 12085) (Rhodobacter sphaeroides).